Consider the following 348-residue polypeptide: S-adenosylmethionine:tRNA ribosyltransferase-isomerase (348 aa).

The protein belongs to the QueA family. Monomer.

It is found in the cytoplasm. It carries out the reaction 7-aminomethyl-7-carbaguanosine(34) in tRNA + S-adenosyl-L-methionine = epoxyqueuosine(34) in tRNA + adenine + L-methionine + 2 H(+). It participates in tRNA modification; tRNA-queuosine biosynthesis. In terms of biological role, transfers and isomerizes the ribose moiety from AdoMet to the 7-aminomethyl group of 7-deazaguanine (preQ1-tRNA) to give epoxyqueuosine (oQ-tRNA). The polypeptide is S-adenosylmethionine:tRNA ribosyltransferase-isomerase (Alteromonas mediterranea (strain DSM 17117 / CIP 110805 / LMG 28347 / Deep ecotype)).